The sequence spans 752 residues: MAP/microtubule affinity-regulating kinase 4 (752 aa).

Positions 1-36 (MSSRTALAPGNDRNSDTHGTLGSGRSSDKGPSWSSR) are disordered. Residues 59–310 (YRLLRTIGKG…LEQIMKDKWI (252 aa)) enclose the Protein kinase domain. Residues 65–73 (IGKGNFAKV) and Lys-88 contribute to the ATP site. The active-site Proton acceptor is Asp-181. Position 214 is a phosphothreonine; by LKB1 (Thr-214). Positions 324–368 (EPEEDFGDTKRIEVMVGMGYTREEIKEALTNQKYNEVTATYLLLG) constitute a UBA domain. The segment at 385–615 (ARVRAPSDTT…SGRPRPTTNL (231 aa)) is disordered. The segment covering 391 to 406 (SDTTNGTSSSKGSSHN) has biased composition (low complexity). Phosphoserine occurs at positions 423 and 543. The segment covering 544–553 (PSSHSLAPPS) has biased composition (low complexity). One can recognise a KA1 domain in the interval 703–752 (AGGPEPLSHFEVEVCQLPRPGLRGVLFRRVAGTALAFRTLVTRISNDLEL).

This sequence belongs to the protein kinase superfamily. CAMK Ser/Thr protein kinase family. SNF1 subfamily. In terms of assembly, interacts with MAPT/TAU. Interacts with gamma-tubulin. Interacts with ODF2. Interacts with USP9X. Interacts with YWHAQ. Interacts with NLRP3; promoting NLRP3 recruitment to microtubule organizing center (MTOC). Mg(2+) serves as cofactor. Ubiquitinated with 'Lys-29'- and 'Lys-33'-linked polyubiquitins which appear to impede LKB1-mediated phosphorylation. Deubiquitinated by USP9X. Post-translationally, phosphorylated at Thr-214 by STK11/LKB1 in complex with STE20-related adapter-alpha (STRADA) pseudo kinase and CAB39. Phosphorylated throughout the cell cycle. As to expression, isoform 1 and isoform 2 show similar expression patterns in the central nervous system and are present in the same subsets of neurons including pyramidal and non-pyramidal neurons in the cerebral cortex and hippocampus, cerebellar Purkinje cells, and interneurons and motor neurons in the spinal cord but not in glial cells (at protein level). Isoform 2 is the major isoform in brain and cerebellum. Also expressed in spleen, liver, small intestine, colon, kidney, tongue, testis and lung. Isoform 1 and isoform 2 are expressed at similar levels in heart.

The protein localises to the cytoplasm. The protein resides in the cytoskeleton. Its subcellular location is the microtubule organizing center. It localises to the centrosome. It is found in the cilium axoneme. The protein localises to the cilium basal body. The protein resides in the cell projection. Its subcellular location is the dendrite. The catalysed reaction is L-seryl-[protein] + ATP = O-phospho-L-seryl-[protein] + ADP + H(+). It carries out the reaction L-threonyl-[protein] + ATP = O-phospho-L-threonyl-[protein] + ADP + H(+). Activated by phosphorylation on Thr-214. In terms of biological role, serine/threonine-protein kinase. Phosphorylates the microtubule-associated protein MAPT/TAU. Also phosphorylates the microtubule-associated proteins MAP2 and MAP4. Involved in regulation of the microtubule network, causing reorganization of microtubules into bundles. Required for the initiation of axoneme extension during cilium assembly. Regulates the centrosomal location of ODF2 and phosphorylates ODF2 in vitro. Plays a role in cell cycle progression, specifically in the G1/S checkpoint. Reduces neuronal cell survival. Plays a role in energy homeostasis by regulating satiety and metabolic rate. Promotes adipogenesis by activating JNK1 and inhibiting the p38MAPK pathway, and triggers apoptosis by activating the JNK1 pathway. Phosphorylates mTORC1 complex member RPTOR and acts as a negative regulator of the mTORC1 complex, probably due to disruption of the interaction between phosphorylated RPTOR and the RRAGA/RRAGC heterodimer which is required for mTORC1 activation. Involved in NLRP3 positioning along microtubules by mediating NLRP3 recruitment to microtubule organizing center (MTOC) upon inflammasome activation. The sequence is that of MAP/microtubule affinity-regulating kinase 4 from Mus musculus (Mouse).